Here is a 405-residue protein sequence, read N- to C-terminus: Phosphoglycerate kinase (405 aa).

Residues 24–26 (DFN), R40, 63–66 (HLGR), R122, and R162 each bind substrate. Residues K212, E331, and 361-364 (GGDS) each bind ATP.

It belongs to the phosphoglycerate kinase family. As to quaternary structure, monomer.

It localises to the cytoplasm. It carries out the reaction (2R)-3-phosphoglycerate + ATP = (2R)-3-phospho-glyceroyl phosphate + ADP. The protein operates within carbohydrate degradation; glycolysis; pyruvate from D-glyceraldehyde 3-phosphate: step 2/5. The polypeptide is Phosphoglycerate kinase (Corynebacterium aurimucosum (strain ATCC 700975 / DSM 44827 / CIP 107346 / CN-1) (Corynebacterium nigricans)).